A 383-amino-acid chain; its full sequence is Delta(12)-fatty-acid desaturase (383 aa).

The tract at residues 1 to 24 is disordered; it reads MGAGGRMPVPTSSKKSETDTTKRV. The span at 14–24 shows a compositional bias: basic and acidic residues; sequence KKSETDTTKRV. A helical membrane pass occupies residues 56–76; the sequence is LISDIIIASCFYYVATNYFSL. The Histidine box-1 signature appears at 105–109; the sequence is HECGH. The helical transmembrane segment at 117-137 threads the bilayer; that stretch reads WLDDTVGLIFHSFLLVPYFSW. The Histidine box-2 signature appears at 141-145; it reads HRRHH. Helical transmembrane passes span 179-199, 225-245, and 252-272; these read IMML…FNVS, IYLS…YAAA, and ICLY…ITYL. The Histidine box-3 signature appears at 315–319; sequence HVAHH.

The protein belongs to the fatty acid desaturase type 1 family. In terms of assembly, homo- and heterodimer. Interacts with FAD3 but not with FAD6. FAD2-FAD3 heterodimers can form a metabolic channel in which 18:1-PC is converted to 18:3-PC without releasing a free 18:2-PC intermediate. As to expression, expressed in shoots and roots. Expressed in leaves, stems, flowers and siliques.

It is found in the endoplasmic reticulum membrane. It localises to the microsome membrane. The enzyme catalyses (9Z)-octadecenoyl-CoA + 2 Fe(II)-[cytochrome b5] + O2 + 2 H(+) = (9Z,12Z)-octadecadienoyl-CoA + 2 Fe(III)-[cytochrome b5] + 2 H2O. It catalyses the reaction (9Z)-hexadecenoyl-CoA + 2 Fe(II)-[cytochrome b5] + O2 + 2 H(+) = (9Z,12Z)-hexadecadienoyl-CoA + 2 Fe(III)-[cytochrome b5] + 2 H2O. It carries out the reaction a (9Z)-octadecenoyl-containing glycerolipid + 2 Fe(II)-[cytochrome b5] + O2 + 2 H(+) = a (9Z,12Z)-octadecadienoyl-containing glycerolipid + 2 Fe(III)-[cytochrome b5] + 2 H2O. The catalysed reaction is (9Z)-octadecenoyl-CoA + AH2 + O2 = (9Z,12Z)-octadecadienoyl-CoA + A + 2 H2O. The enzyme catalyses (9Z)-hexadecenoyl-CoA + AH2 + O2 = (9Z,12Z)-hexadecadienoyl-CoA + A + 2 H2O. It catalyses the reaction (9Z)-tetradecenoyl-CoA + 2 Fe(II)-[cytochrome b5] + O2 + 2 H(+) = (9Z,12Z)-tetradecadienoyl-CoA + 2 Fe(III)-[cytochrome b5] + 2 H2O. It carries out the reaction (9Z)-pentadecenoyl-CoA + 2 Fe(II)-[cytochrome b5] + O2 + 2 H(+) = (9Z,12Z)-pentadecadienoyl-CoA + 2 Fe(III)-[cytochrome b5] + 2 H2O. The catalysed reaction is (9Z)-heptadecenoyl-CoA + 2 Fe(II)-[cytochrome b5] + O2 + 2 H(+) = (9Z,12Z)-heptadecadienoyl-CoA + 2 Fe(III)-[cytochrome b5] + 2 H2O. It participates in lipid metabolism; polyunsaturated fatty acid biosynthesis. ER (microsomal) omega-6 fatty acid desaturase introduces the second double bond in the biosynthesis of 18:3 fatty acids, important constituents of plant membranes. Delta(12)-desaturase with regioselectivity determined by the double bond (delta(9) position) and carboxyl group of the substrate. Can use both 16:1 and 18:1 fatty acids as substrates. It is thought to use cytochrome b5 as an electron donor and to act on fatty acids esterified to phosphatidylcholine (PC) and, possibly, other phospholipids. Very low constitutive hydroxylation activity. Required for desaturation of fatty acids present in extraplastidial membranes, including mitochondria. Required for salt tolerance during seed germination and early seedling growth. This Arabidopsis thaliana (Mouse-ear cress) protein is Delta(12)-fatty-acid desaturase.